We begin with the raw amino-acid sequence, 124 residues long: Large ribosomal subunit protein bL21 (124 aa).

The segment at Asn-105–Glu-124 is disordered.

Belongs to the bacterial ribosomal protein bL21 family. As to quaternary structure, part of the 50S ribosomal subunit. Contacts protein L20.

This protein binds to 23S rRNA in the presence of protein L20. The protein is Large ribosomal subunit protein bL21 of Rhodopseudomonas palustris (strain BisA53).